A 1305-amino-acid chain; its full sequence is Cyclin-G-associated kinase (1305 aa).

Residue S2 is modified to N-acetylserine. A phosphoserine mark is found at S2 and S16. In terms of domain architecture, Protein kinase spans 40 to 315; it reads LRVRRVLAEG…IAEVVRQLQE (276 aa). D173 acts as the Proton acceptor in catalysis. The tract at residues 332-354 is disordered; sequence LEQNGGYGNSGPSRAQPPSGGPV. A Phosphatase tensin-type domain is found at 397–564; it reads SVANYAKGDL…EYVCDMVAEE (168 aa). S454 carries the phosphoserine modification. The C2 tensin-type domain maps to 570–708; that stretch reads SKPMLVKSVV…FQVNLEVEVE (139 aa). The disordered stretch occupies residues 747–856; the sequence is FGKPELPRQP…TPRLAAGTRQ (110 aa). Residue S768 is modified to Phosphoserine. T774 is modified (phosphothreonine). Residues 776 to 789 are compositionally biased toward polar residues; it reads SDSPQSSSTDTNHF. S781 carries the phosphoserine modification. T792 is subject to Phosphothreonine. Polar residues predominate over residues 805–817; sequence VDNTSPKESQSNL. Residues S809, S824, and S827 each carry the phosphoserine modification. Residues 822–832 show a composition bias toward acidic residues; that stretch reads DGSEVSDEEEA. Residues 836–848 are compositionally biased toward basic and acidic residues; the sequence is SEERKPGAGEDTP. Phosphoserine is present on S938. The disordered stretch occupies residues 1044 to 1141; that stretch reads LPGPASMPVP…PQAKPAPRAS (98 aa). The segment covering 1105–1131 has biased composition (polar residues); the sequence is VGTSATTHKSNSSWQTTRPTAPGTSWP. An Omega-N-methylarginine modification is found at R1122. A Phosphoserine modification is found at S1171. Positions 1241–1305 constitute a J domain; that stretch reads SRWTPVSMAD…FENQGSRPLF (65 aa).

It belongs to the protein kinase superfamily. Ser/Thr protein kinase family.

Its subcellular location is the cytoplasm. It is found in the perinuclear region. The protein localises to the golgi apparatus. It localises to the trans-Golgi network. The protein resides in the cell junction. Its subcellular location is the focal adhesion. It is found in the cytoplasmic vesicle. The protein localises to the clathrin-coated vesicle. It carries out the reaction L-seryl-[protein] + ATP = O-phospho-L-seryl-[protein] + ADP + H(+). The enzyme catalyses L-threonyl-[protein] + ATP = O-phospho-L-threonyl-[protein] + ADP + H(+). Its function is as follows. Associates with cyclin G and CDK5. Seems to act as an auxilin homolog that is involved in the uncoating of clathrin-coated vesicles by Hsc70 in non-neuronal cells. Expression oscillates slightly during the cell cycle, peaking at G1. May play a role in clathrin-mediated endocytosis and intracellular trafficking, and in the dynamics of clathrin assembly/disassembly. In Rattus norvegicus (Rat), this protein is Cyclin-G-associated kinase.